The sequence spans 314 residues: Probable 5-dehydro-4-deoxyglucarate dehydratase (314 aa).

The protein belongs to the DapA family.

The enzyme catalyses 5-dehydro-4-deoxy-D-glucarate + H(+) = 2,5-dioxopentanoate + CO2 + H2O. Its pathway is carbohydrate acid metabolism; D-glucarate degradation; 2,5-dioxopentanoate from D-glucarate: step 2/2. This chain is Probable 5-dehydro-4-deoxyglucarate dehydratase, found in Bradyrhizobium sp. (strain ORS 278).